The chain runs to 124 residues: Small ribosomal subunit protein uS12 (124 aa).

Asp-89 is modified (3-methylthioaspartic acid). The tract at residues 102–124 is disordered; it reads LDTSGVNNRKHGRSKYGTKRPKS. Over residues 109-124 the composition is skewed to basic residues; sequence NRKHGRSKYGTKRPKS.

Belongs to the universal ribosomal protein uS12 family. As to quaternary structure, part of the 30S ribosomal subunit. Contacts proteins S8 and S17. May interact with IF1 in the 30S initiation complex.

In terms of biological role, with S4 and S5 plays an important role in translational accuracy. Functionally, interacts with and stabilizes bases of the 16S rRNA that are involved in tRNA selection in the A site and with the mRNA backbone. Located at the interface of the 30S and 50S subunits, it traverses the body of the 30S subunit contacting proteins on the other side and probably holding the rRNA structure together. The combined cluster of proteins S8, S12 and S17 appears to hold together the shoulder and platform of the 30S subunit. The polypeptide is Small ribosomal subunit protein uS12 (Francisella philomiragia subsp. philomiragia (strain ATCC 25017 / CCUG 19701 / FSC 153 / O#319-036)).